The chain runs to 51 residues: Small ribosomal subunit protein eS31 (51 aa).

Residues Cys21, Cys24, Cys39, and Cys42 each coordinate Zn(2+). The segment at 21–42 (CPRCGPGVFLAEHEDRFSCGRC) adopts a C4-type zinc-finger fold.

It belongs to the eukaryotic ribosomal protein eS31 family. Part of the 30S ribosomal subunit. Requires Zn(2+) as cofactor.

In Picrophilus torridus (strain ATCC 700027 / DSM 9790 / JCM 10055 / NBRC 100828 / KAW 2/3), this protein is Small ribosomal subunit protein eS31.